The sequence spans 141 residues: Large ribosomal subunit protein uL16 (141 aa).

Residues 1–20 form a disordered region; it reads MLMPKRTKYRKQQKGRNRGK.

This sequence belongs to the universal ribosomal protein uL16 family. As to quaternary structure, part of the 50S ribosomal subunit.

Its function is as follows. Binds 23S rRNA and is also seen to make contacts with the A and possibly P site tRNAs. The sequence is that of Large ribosomal subunit protein uL16 from Nautilia profundicola (strain ATCC BAA-1463 / DSM 18972 / AmH).